Consider the following 567-residue polypeptide: Laccase-3 (567 aa).

A signal peptide spans 1–24; it reads MASSSSSRLLFLLSCSVLALLAGA. 2 consecutive Plastocyanin-like domains span residues 32 to 148 and 158 to 310; these read IVQE…PREN and REVP…YDCG. A glycan (N-linked (GlcNAc...) asparagine) is linked at asparagine 78. 4 residues coordinate Cu cation: histidine 82, histidine 84, histidine 127, and histidine 129. 7 N-linked (GlcNAc...) asparagine glycosylation sites follow: asparagine 148, asparagine 187, asparagine 203, asparagine 298, asparagine 330, asparagine 379, and asparagine 389. The Plastocyanin-like 3 domain maps to 415–551; it reads DFPAYPPVQF…AMAFLVEDGY (137 aa). Residues histidine 468, histidine 471, histidine 473, histidine 530, cysteine 531, histidine 532, and histidine 536 each coordinate Cu cation.

It belongs to the multicopper oxidase family. Cu cation is required as a cofactor.

It localises to the secreted. The protein resides in the extracellular space. The protein localises to the apoplast. It catalyses the reaction 4 hydroquinone + O2 = 4 benzosemiquinone + 2 H2O. Its function is as follows. Lignin degradation and detoxification of lignin-derived products. In Oryza sativa subsp. japonica (Rice), this protein is Laccase-3 (LAC3).